A 353-amino-acid polypeptide reads, in one-letter code: uncharacterized protein (353 aa).

This sequence belongs to the MG067/MG068/MG395 family.

This is an uncharacterized protein from Mycoplasma pneumoniae (strain ATCC 29342 / M129 / Subtype 1) (Mycoplasmoides pneumoniae).